Reading from the N-terminus, the 566-residue chain is MNELHDGESSEEGRINVEDHLEEAKKDDTGHWKHSGTAKPSKFRAFIRLHFKDSRKFAFSRKKEKELTSEDSDAANQSPSGAPESQTEEESDRKIDGTGSSAEGGDGSGTDSISVIKKSFFKSGRKKKDVPKSRNVSRSNGADTSVQREKLKDIFSPHGKEKELAHIKKTVATRARTYSSNSIKICDVEVGPSSFEKVFLLGKGDVGRVYLVREKKSGKFYAMKVLSKQEMIKRNKSKRAFAEQHILATSNHPFIVTLYHSFQSDEYLYLCMEYCMGGEFFRALQRRPGRCLSENEAKFYIAEVTAALEYLHLMGFIYRDLKPENILLHESGHIMLSDFDLSKQSNSAGAPTVIQARNAPSAQNAYALDTKSCIADFRTNSFVGTEEYIAPEVIKGCGHTSAVDWWTLGILFYEMLYATTPFKGKNRNMTFSNILHKDVIFPEYADAPSISSLCKNLIRKLLVKDENDRLGSQAGAADVKLHPFFKNVQWALLRHTEPPIIPKLAPIDEKGNPNISHLKESKSLDITHSPQNTQTVEVPLSNLSGADHGDDPFESFNSVTVHHEWD.

The span at 1–31 (MNELHDGESSEEGRINVEDHLEEAKKDDTGH) shows a compositional bias: basic and acidic residues. 2 disordered regions span residues 1–39 (MNEL…GTAK) and 60–152 (SRKK…EKLK). Residues 74 to 85 (AANQSPSGAPES) show a composition bias toward polar residues. Residues 119–129 (SFFKSGRKKKD) are compositionally biased toward basic residues. A compositionally biased stretch (polar residues) spans 134–145 (RNVSRSNGADTS). The region spanning 195-485 (FEKVFLLGKG…AADVKLHPFF (291 aa)) is the Protein kinase domain. ATP contacts are provided by residues 201-209 (LGKGDVGRV) and Lys224. The Proton acceptor role is filled by Asp320. Thr379 is modified (phosphothreonine). Ser381 is subject to Phosphoserine. Thr385 bears the Phosphothreonine mark.

Belongs to the protein kinase superfamily. Ser/Thr protein kinase family. KIN82 subfamily.

The catalysed reaction is L-seryl-[protein] + ATP = O-phospho-L-seryl-[protein] + ADP + H(+). It catalyses the reaction L-threonyl-[protein] + ATP = O-phospho-L-threonyl-[protein] + ADP + H(+). In Schizosaccharomyces pombe (strain 972 / ATCC 24843) (Fission yeast), this protein is Serine/threonine-protein kinase ppk14 (ppk14).